The primary structure comprises 654 residues: Fructose-1,6-bisphosphatase class 3 (654 aa).

Positions 288–307 (NPAFKPKKRPDKHERLTQRE) are disordered. Residues 298 to 307 (DKHERLTQRE) are compositionally biased toward basic and acidic residues.

Belongs to the FBPase class 3 family. Mn(2+) serves as cofactor.

The enzyme catalyses beta-D-fructose 1,6-bisphosphate + H2O = beta-D-fructose 6-phosphate + phosphate. Its pathway is carbohydrate biosynthesis; gluconeogenesis. The sequence is that of Fructose-1,6-bisphosphatase class 3 from Staphylococcus aureus (strain Mu3 / ATCC 700698).